A 39-amino-acid polypeptide reads, in one-letter code: Potassium channel toxin alpha-KTx 2.17 (39 aa).

3 disulfide bridges follow: cysteine 7–cysteine 29, cysteine 13–cysteine 34, and cysteine 17–cysteine 36. Isoleucine 39 carries the post-translational modification Isoleucine amide.

The protein belongs to the short scorpion toxin superfamily. Potassium channel inhibitor family. Alpha-KTx 02 subfamily. As to expression, expressed by the venom gland.

Its subcellular location is the secreted. Its function is as follows. Blocks human voltage-gated potassium channels Kv1.1/KCNA1 (IC(50)=4.8 nM) and Kv1.2/KCNA2 (IC(50)=2.9 nM). The sequence is that of Potassium channel toxin alpha-KTx 2.17 from Centruroides tecomanus (Scorpion).